The chain runs to 297 residues: 4,5-DOPA dioxygenase extradiol-like protein (297 aa).

Residues His30, His82, His205, and His263 each contribute to the Zn(2+) site.

The protein belongs to the DODA-type extradiol aromatic ring-opening dioxygenase family. Zn(2+) is required as a cofactor.

It localises to the cytoplasm. The protein localises to the nucleus. May be involved in the metabolism of aromatic compounds. The protein is 4,5-DOPA dioxygenase extradiol-like protein of Schizosaccharomyces pombe (strain 972 / ATCC 24843) (Fission yeast).